The following is a 724-amino-acid chain: Protein arginine N-methyltransferase 1.6 (724 aa).

SAM-dependent MTase PRMT-type domains follow at residues 61–388 and 395–721; these read NDQP…YNLK and HERT…IVTH. Residues Glu183 and Glu192 contribute to the active site.

Belongs to the class I-like SAM-binding methyltransferase superfamily. Protein arginine N-methyltransferase family. PRMT7 subfamily.

Its function is as follows. Arginine methyltransferase that can both catalyze the formation of omega-N monomethylarginine (MMA) and symmetrical dimethylarginine (sDMA). The protein is Protein arginine N-methyltransferase 1.6 (PRMT16) of Arabidopsis thaliana (Mouse-ear cress).